The primary structure comprises 187 residues: Peptide deformylase (187 aa).

Residues cysteine 107 and histidine 149 each coordinate Fe cation. The active site involves glutamate 150. A Fe cation-binding site is contributed by histidine 153.

It belongs to the polypeptide deformylase family. Fe(2+) is required as a cofactor.

It catalyses the reaction N-terminal N-formyl-L-methionyl-[peptide] + H2O = N-terminal L-methionyl-[peptide] + formate. In terms of biological role, removes the formyl group from the N-terminal Met of newly synthesized proteins. Requires at least a dipeptide for an efficient rate of reaction. N-terminal L-methionine is a prerequisite for activity but the enzyme has broad specificity at other positions. The sequence is that of Peptide deformylase from Picosynechococcus sp. (strain ATCC 27264 / PCC 7002 / PR-6) (Agmenellum quadruplicatum).